We begin with the raw amino-acid sequence, 249 residues long: Eukaryotic translation initiation factor 6 (249 aa).

It belongs to the eIF-6 family. As to quaternary structure, monomer. Associates with the 60S ribosomal subunit.

The protein localises to the cytoplasm. It is found in the nucleus. It localises to the nucleolus. In terms of biological role, binds to the 60S ribosomal subunit and prevents its association with the 40S ribosomal subunit to form the 80S initiation complex in the cytoplasm. May also be involved in ribosome biogenesis. This Babesia bovis protein is Eukaryotic translation initiation factor 6.